Consider the following 146-residue polypeptide: Hemoglobin subunit beta (146 aa).

The 145-residue stretch at 2–146 (HWTETERATI…VVAALSREYH (145 aa)) folds into the Globin domain. Positions 63 and 92 each coordinate heme b.

Belongs to the globin family. As to quaternary structure, heterotetramer of two alpha chains and two beta chains (an easy dimerization is also reported). Red blood cells.

In terms of biological role, involved in oxygen transport from the lung to the various peripheral tissues. In Latimeria chalumnae (Coelacanth), this protein is Hemoglobin subunit beta (HBB).